The sequence spans 365 residues: 1-acyl-sn-glycerol-3-phosphate acyltransferase epsilon (365 aa).

A helical transmembrane segment spans residues 15–35 (LLPSVLLLGSAPTYLLAWTLW). The HXXXXD motif motif lies at 93 to 98 (HQSTVD). A helical transmembrane segment spans residues 345–365 (LYMGTWLYGTLLGCLWFVIKA).

It belongs to the 1-acyl-sn-glycerol-3-phosphate acyltransferase family. In terms of tissue distribution, widely expressed.

It is found in the endoplasmic reticulum membrane. The protein localises to the nucleus envelope. Its subcellular location is the mitochondrion. It catalyses the reaction a 1-acyl-sn-glycero-3-phosphate + an acyl-CoA = a 1,2-diacyl-sn-glycero-3-phosphate + CoA. The enzyme catalyses 1-(9Z-octadecenoyl)-sn-glycero-3-phosphate + tetradecanoyl-CoA = 1-(9Z)-octadecenoyl-2-tetradecanoyl-sn-glycero-3-phosphate + CoA. The catalysed reaction is pentadecanoyl-CoA + 1-(9Z-octadecenoyl)-sn-glycero-3-phosphate = 1-(9Z)-octadecenoyl-2-pentadecanoyl-sn-glycero-3-phosphate + CoA. It carries out the reaction 1-(9Z-octadecenoyl)-sn-glycero-3-phosphate + octadecanoyl-CoA = 1-(9Z-octadecenoyl)-2-octadecanoyl-sn-glycero-3-phosphate + CoA. It catalyses the reaction nonadecanoyl-CoA + 1-(9Z-octadecenoyl)-sn-glycero-3-phosphate = 1-(9Z)-octadecenoyl-2-nonadecanoyl-sn-glycero-3-phosphate + CoA. The enzyme catalyses 1-(9Z-octadecenoyl)-sn-glycero-3-phosphoethanolamine + (9Z)-octadecenoyl-CoA = 1,2-di-(9Z-octadecenoyl)-sn-glycero-3-phosphoethanolamine + CoA. The catalysed reaction is 1-(9Z-octadecenoyl)-sn-glycero-3-phosphocholine + (9Z)-octadecenoyl-CoA = 1,2-di-(9Z-octadecenoyl)-sn-glycero-3-phosphocholine + CoA. It carries out the reaction 1-(9Z-octadecenoyl)-sn-glycero-3-phospho-(1D-myo-inositol) + (5Z,8Z,11Z,14Z)-eicosatetraenoyl-CoA = 1-(9Z-octadecenoyl)-2-(5Z,8Z,11Z,14Z-eicosatetraenoyl)-sn-glycero-3-phospho-1D-myo-inositol + CoA. It catalyses the reaction 1-(9Z-octadecenoyl)-sn-glycero-3-phospho-L-serine + (9Z)-octadecenoyl-CoA = 1,2-di-(9Z)-octadecenoyl-sn-glycero-3-phospho-L-serine + CoA. The enzyme catalyses 1-(9Z-octadecenoyl)-sn-glycero-3-phospho-L-serine + (5Z,8Z,11Z,14Z)-eicosatetraenoyl-CoA = 1-(9Z-octadecenoyl)-2-(5Z,8Z,11Z,14Z-eicosatetraenoyl)-sn-glycero-3-phospho-L-serine + CoA. The catalysed reaction is 1-hexadecanoyl-sn-glycero-3-phosphate + (9Z)-octadecenoyl-CoA = 1-hexadecanoyl-2-(9Z-octadecenoyl)-sn-glycero-3-phosphate + CoA. It carries out the reaction 1-heptadecanoyl-sn-glycero-3-phosphate + (9Z)-octadecenoyl-CoA = 1-heptadecanoyl-2-(9Z)-octadecenoyl-sn-glycero-3-phosphate + CoA. It catalyses the reaction 1-(5Z,8Z,11Z,14Z-eicosatetraenoyl)-sn-glycero-3-phosphate + (9Z)-octadecenoyl-CoA = 1-(5Z,8Z,11Z,14Z)-eicosatetraenoyl-2-(9Z)-octadecenoyl-sn-glycero-3-phosphate + CoA. The enzyme catalyses 1-octadecanoyl-sn-glycero-3-phosphate + (9Z)-octadecenoyl-CoA = 1-octadecanoyl-2-(9Z-octadecenoyl)-sn-glycero-3-phosphate + CoA. The catalysed reaction is 1-(9Z-octadecenoyl)-sn-glycero-3-phosphate + (5Z,8Z,11Z,14Z)-eicosatetraenoyl-CoA = 1-(9Z)-octadecenoyl-2-(5Z,8Z,11Z,14Z)-eicosatetraenoyl-sn-glycero-3-phosphate + CoA. It carries out the reaction heptadecanoyl-CoA + 1-(9Z-octadecenoyl)-sn-glycero-3-phosphate = 1-(9Z)-octadecenoyl-2-heptadecanoyl-sn-glycero-3-phosphate + CoA. It catalyses the reaction 1-(9Z-octadecenoyl)-sn-glycero-3-phosphocholine + (5Z,8Z,11Z,14Z)-eicosatetraenoyl-CoA = 1-(9Z)-octadecenoyl-2-(5Z,8Z,11Z,14Z)-icosatetraenoyl-sn-glycero-3-phosphocholine + CoA. The enzyme catalyses 1-(9Z-octadecenoyl)-sn-glycero-3-phosphate + (9Z)-octadecenoyl-CoA = 1,2-di-(9Z-octadecenoyl)-sn-glycero-3-phosphate + CoA. The catalysed reaction is 1-(9Z-octadecenoyl)-sn-glycero-3-phosphate + hexadecanoyl-CoA = 1-hexadecanoyl-2-(9Z-octadecenoyl)-sn-glycero-3-phosphate + CoA. Its pathway is phospholipid metabolism; CDP-diacylglycerol biosynthesis; CDP-diacylglycerol from sn-glycerol 3-phosphate: step 2/3. Functionally, converts 1-acyl-sn-glycerol-3-phosphate (lysophosphatidic acid or LPA) into 1,2-diacyl-sn-glycerol-3-phosphate (phosphatidic acid or PA) by incorporating an acyl moiety at the sn-2 position of the glycerol backbone. Acts on LPA containing saturated or unsaturated fatty acids C15:0-C20:4 at the sn-1 position using C18:1-CoA as the acyl donor. Also acts on lysophosphatidylethanolamine using oleoyl-CoA, but not arachidonoyl-CoA, and lysophosphatidylinositol using arachidonoyl-CoA, but not oleoyl-CoA. Activity toward lysophosphatidylglycerol not detectable. This chain is 1-acyl-sn-glycerol-3-phosphate acyltransferase epsilon (Agpat5), found in Mus musculus (Mouse).